We begin with the raw amino-acid sequence, 202 residues long: Small ribosomal subunit protein uS4c (202 aa).

One can recognise an S4 RNA-binding domain in the interval methionine 90–isoleucine 153.

This sequence belongs to the universal ribosomal protein uS4 family. As to quaternary structure, part of the 30S ribosomal subunit. Contacts protein S5. The interaction surface between S4 and S5 is involved in control of translational fidelity.

The protein localises to the plastid. Its subcellular location is the chloroplast. One of the primary rRNA binding proteins, it binds directly to 16S rRNA where it nucleates assembly of the body of the 30S subunit. Its function is as follows. With S5 and S12 plays an important role in translational accuracy. The polypeptide is Small ribosomal subunit protein uS4c (rps4) (Splachnum sphaericum (Pinkstink dung moss)).